Here is a 233-residue protein sequence, read N- to C-terminus: Purine nucleoside phosphorylase DeoD-type (233 aa).

Position 4 (H4) interacts with a purine D-ribonucleoside. Phosphate-binding positions include G20, R24, R43, and 87 to 90; that span reads RIGT. A purine D-ribonucleoside contacts are provided by residues 179–181 and 203–204; these read EME and SD. Residue D204 is the Proton donor of the active site.

This sequence belongs to the PNP/UDP phosphorylase family. Homohexamer; trimer of homodimers.

It catalyses the reaction a purine D-ribonucleoside + phosphate = a purine nucleobase + alpha-D-ribose 1-phosphate. The enzyme catalyses a purine 2'-deoxy-D-ribonucleoside + phosphate = a purine nucleobase + 2-deoxy-alpha-D-ribose 1-phosphate. Its function is as follows. Catalyzes the reversible phosphorolytic breakdown of the N-glycosidic bond in the beta-(deoxy)ribonucleoside molecules, with the formation of the corresponding free purine bases and pentose-1-phosphate. The polypeptide is Purine nucleoside phosphorylase DeoD-type (Helicobacter pylori (strain J99 / ATCC 700824) (Campylobacter pylori J99)).